The sequence spans 94 residues: MSDHNEAVRVRISGRVQGVGFRMWTRDEALRLGVTGWVRNEADGSVSALIAGADSAISAMIERLRRGPAGASVSGVETEVAQLENMPRDFRITG.

One can recognise an Acylphosphatase-like domain in the interval 7 to 94; sequence AVRVRISGRV…NMPRDFRITG (88 aa). Catalysis depends on residues R22 and N40.

The protein belongs to the acylphosphatase family.

The catalysed reaction is an acyl phosphate + H2O = a carboxylate + phosphate + H(+). This chain is Acylphosphatase (acyP), found in Rhizobium etli (strain ATCC 51251 / DSM 11541 / JCM 21823 / NBRC 15573 / CFN 42).